Here is a 284-residue protein sequence, read N- to C-terminus: uncharacterized protein (284 aa).

Residues 1 to 23 (MKRGCAIAVMICGLITSVSAASA) form the signal peptide.

This sequence belongs to the surface antigen msp4 family.

This is an uncharacterized protein from Brucella suis biovar 1 (strain 1330).